Here is a 624-residue protein sequence, read N- to C-terminus: Chitin elicitor receptor kinase 1 (624 aa).

Residues 1-18 form the signal peptide; the sequence is MEASTSLLVLVLAAAAFA. The Extracellular portion of the chain corresponds to 19-240; that stretch reads AGTVTEAAGD…SPGKGASAGA (222 aa). Intrachain disulfides connect Cys30–Cys93, Cys34–Cys160, and Cys91–Cys158. Asn48 carries an N-linked (GlcNAc...) asparagine glycan. 115-121 contributes to the chitin binding site; that stretch reads RGQIYTS. Asn128 carries N-linked (GlcNAc...) asparagine glycosylation. A chitin-binding site is contributed by 142–148; sequence PANNIPD. Asn153 and Asn157 each carry an N-linked (GlcNAc...) asparagine glycan. The LysM domain maps to 173–218; sequence LTYPLRAEDTLASVAATYGLSSQLDVVRRYNPGMESATGSGIVYIP. A glycan (N-linked (GlcNAc...) asparagine) is linked at Asn223. A helical membrane pass occupies residues 241 to 261; sequence IAGGVVAGVVVLAAIFLYIIF. At 262–624 the chain is on the cytoplasmic side; the sequence is YRRRKAKQAT…QGLVNLMSGR (363 aa). A Protein kinase domain is found at 324 to 599; that stretch reads FSIGNKIGQG…RSVVVALMTL (276 aa). ATP contacts are provided by residues 330-338 and Lys351; that span reads IGQGGFGAV. Asp443 serves as the catalytic Proton acceptor.

The protein belongs to the protein kinase superfamily. Ser/Thr protein kinase family. As to quaternary structure, homooligomer. Interacts with CEBIP. Interacts with LYP4 and LYP6. Interacts with RLCK176. In terms of processing, autophosphorylated; induced by chitin and derivatives. Expressed in seedlings, roots, shoots and stems, and, to a lower extent, in flowers.

The protein localises to the cell membrane. The catalysed reaction is L-seryl-[protein] + ATP = O-phospho-L-seryl-[protein] + ADP + H(+). The enzyme catalyses L-threonyl-[protein] + ATP = O-phospho-L-threonyl-[protein] + ADP + H(+). Its function is as follows. Lysin motif (LysM) receptor kinase required as a cell surface receptor for chitin elicitor (chitooligosaccharides) signaling leading to innate immunity in response to biotic stresses. Involved in the resistance to pathogenic fungi, probably by sensing microbe-associated molecular patterns (MAMP) and pathogen-associated molecular patterns (PAMP). Involved in the detection of microbial peptidoglycans (PGNs) and mediates PGN response. Plays dual roles in PGN and chitin signaling during innate immunity. Acts as an adapter for LYP4 and LYP6 and mediates signal transduction from the extracellular to intracellular spaces. Participates in the activation of defense genes during response to PGN and chitin. Phosphorylates the downstream partner RLCK185 in response to chitin elicitation. The polypeptide is Chitin elicitor receptor kinase 1 (Oryza sativa subsp. japonica (Rice)).